Reading from the N-terminus, the 101-residue chain is Small ribosomal subunit protein uS14 (101 aa).

This sequence belongs to the universal ribosomal protein uS14 family. As to quaternary structure, part of the 30S ribosomal subunit. Contacts proteins S3 and S10.

In terms of biological role, binds 16S rRNA, required for the assembly of 30S particles and may also be responsible for determining the conformation of the 16S rRNA at the A site. This is Small ribosomal subunit protein uS14 from Serratia proteamaculans (strain 568).